The following is a 496-amino-acid chain: Probable uroporphyrinogen-III C-methyltransferase (496 aa).

It belongs to the precorrin methyltransferase family.

The enzyme catalyses uroporphyrinogen III + 2 S-adenosyl-L-methionine = precorrin-2 + 2 S-adenosyl-L-homocysteine + H(+). Siroheme synthase involved in methionine biosynthesis. The protein is Probable uroporphyrinogen-III C-methyltransferase of Schizosaccharomyces pombe (strain 972 / ATCC 24843) (Fission yeast).